A 481-amino-acid polypeptide reads, in one-letter code: RuvB-like helicase 2 (481 aa).

G73 to T80 serves as a coordination point for ATP. The tract at residues E453–H481 is disordered.

It belongs to the RuvB family. As to quaternary structure, forms homohexameric rings. May form a dodecamer with rept made of two stacked hexameric rings. Component of the chromatin remodeling Ino80 complex. Interacts with Myc and pont. As to expression, higher expression occurs in primordia of mesoderm, anterior and posterior midgut and cephalic furrow early in gastrulation, as well as in endoderm and mesoderm lineages during germ band extension. Later in development expression is only maintained in endoderm cells. Expressed in thoracic and abdominal segment neural precursors of all embryonic chordotonal organs.

The protein localises to the nucleus. The enzyme catalyses ATP + H2O = ADP + phosphate + H(+). Functionally, acts as a transcriptional coactivator in Wg signaling caused by altered arm signaling. Pont and rept interfere antagonistically with nuclear arm signaling function, and are required to enhance or reduce arm activity, respectively. Also an essential cofactor for the normal function of Myc; required for cellular proliferation and growth. In terms of biological role, proposed core component of the chromatin remodeling Ino80 complex which is involved in transcriptional regulation, DNA replication and probably DNA repair. The protein is RuvB-like helicase 2 of Drosophila melanogaster (Fruit fly).